The chain runs to 613 residues: Leucine-rich repeat and immunoglobulin-like domain-containing nogo receptor-interacting protein 1 (613 aa).

An N-terminal signal peptide occupies residues 1-34; sequence MLAGEASMRSPILACWQPILLLMLGSILSGSATG. 2 cysteine pairs are disulfide-bonded: C35/C41 and C39/C50. The LRRNT domain maps to 35–64; that stretch reads CPPRCECSAQERAVLCHRKRFMVVPEGIPT. The Extracellular portion of the chain corresponds to 35-554; it reads CPPRCECSAQ…FDIKTLIIAT (520 aa). LRR repeat units follow at residues 65–86, 89–110, 113–134, 137–158, 161–182, 185–206, 209–230, 257–278, 281–302, 305–326, and 329–350; these read ETRQ…EFAN, HLEE…AFNN, NLRT…VFTG, NLTK…MFQD, NLKS…AFSG, SLEQ…ALSH, GLIV…SFKR, NLTS…SVRH, YLRF…MLHD, RLQE…AFRG, and YLRI…AFHS. A glycan (N-linked (GlcNAc...) asparagine) is linked at N137. An N-linked (GlcNAc...) asparagine glycan is attached at N195. Residues N257, N267, and N286 are each glycosylated (N-linked (GlcNAc...) asparagine). A glycan (N-linked (GlcNAc...) asparagine) is linked at N334. In terms of domain architecture, LRRCT spans 362–416; sequence NPLACDCRLLWVFRRRWRLNFNKQQPTCSTPEFVQGKEFKDFPDVLLPNYFTCRR. Intrachain disulfides connect C366-C389, C368-C414, and C439-C490. In terms of domain architecture, Ig-like C2-type spans 404–508; that stretch reads PDVLLPNYFT…DTMLAHLHVR (105 aa). Residues N485, N498, N519, N530, and N535 are each glycosylated (N-linked (GlcNAc...) asparagine). Residues 555-575 form a helical membrane-spanning segment; the sequence is TMGFISFLGVVLFCLVLLFLW. The Cytoplasmic portion of the chain corresponds to 576–613; it reads SRGKGNTKHNIEIEYVPRKSDAGISSADAPRKFNMKMI.

In terms of assembly, homotetramer. Forms ternary complex with RTN4R/NGFR and RTN4R/TNFRSF19. In terms of processing, N-glycosylated. Contains predominantly high-mannose glycans.

Its subcellular location is the cell membrane. In terms of biological role, functional component of the Nogo receptor signaling complex (RTN4R/NGFR) in RhoA activation responsible for some inhibition of axonal regeneration by myelin-associated factors. Is also an important negative regulator of oligodentrocyte differentiation and axonal myelination. The chain is Leucine-rich repeat and immunoglobulin-like domain-containing nogo receptor-interacting protein 1 (LINGO1) from Gallus gallus (Chicken).